An 801-amino-acid polypeptide reads, in one-letter code: Disks large homolog 4 (801 aa).

The L27 domain maps to K4 to Q60. PDZ domains lie at E153–K240 and E248–L335. The interval H339–R373 is disordered. A PDZ 3 domain is found at R393–P474. The 71-residue stretch at K507–E577 folds into the SH3 domain. Positions A610 to E786 constitute a Guanylate kinase-like domain.

This sequence belongs to the MAGUK family. In terms of processing, ubiquitinated by MDM2 in response to NMDA receptor activation, leading to proteasome-mediated degradation of DLG4 which is required for AMPA receptor endocytosis. Post-translationally, palmitoylated. Palmitoylation is required for targeting to postsynaptic density, plasma membrane and synapses.

The protein localises to the cell membrane. The protein resides in the postsynaptic density. Its subcellular location is the synapse. Its function is as follows. Postsynaptic scaffolding protein that plays a critical role in synaptogenesis and synaptic plasticity by providing a platform for the postsynaptic clustering of crucial synaptic proteins. The chain is Disks large homolog 4 (dlg4) from Danio rerio (Zebrafish).